The following is a 504-amino-acid chain: Outer capsid protein VP5 (504 aa).

Positions Met-1–Glu-42 are involved in membrane permeabilization.

This sequence belongs to the orbivirus VP5 family.

It localises to the virion. Functionally, VP5 protein is one of the two proteins (with VP2) which constitute the virus particle outer capsid. Acts as a membrane permeabilization protein that mediates release of viral particles from endosomal compartments into the cytoplasm. Permeabilization activity is probably negatively regulated by VP2 and is triggered by endosomal degradation of VP2 and exposure to low pH. The polypeptide is Outer capsid protein VP5 (Segment-6) (African horse sickness virus 6 (AHSV-6)).